Reading from the N-terminus, the 363-residue chain is Aminomethyltransferase (363 aa).

This sequence belongs to the GcvT family. In terms of assembly, the glycine cleavage system is composed of four proteins: P, T, L and H.

The catalysed reaction is N(6)-[(R)-S(8)-aminomethyldihydrolipoyl]-L-lysyl-[protein] + (6S)-5,6,7,8-tetrahydrofolate = N(6)-[(R)-dihydrolipoyl]-L-lysyl-[protein] + (6R)-5,10-methylene-5,6,7,8-tetrahydrofolate + NH4(+). The glycine cleavage system catalyzes the degradation of glycine. The polypeptide is Aminomethyltransferase (Staphylococcus aureus (strain N315)).